A 256-amino-acid chain; its full sequence is UstYa family oxidase phomYc (256 aa).

A helical membrane pass occupies residues 38–58 (LVLVLQFVLIISLLASLHILG). Residues N64 and N132 are each glycosylated (N-linked (GlcNAc...) asparagine). Residues 158–162 (HQLHC) carry the HXXHC 1 motif. The N-linked (GlcNAc...) asparagine glycan is linked to N179. The HXXHC 2 signature appears at 193–197 (HIDHC).

It belongs to the ustYa family.

It is found in the membrane. Its pathway is mycotoxin biosynthesis. In terms of biological role, ustYa family oxidase; part of the gene cluster that mediates the biosynthesis of the phomopsins, a group of hexapeptide mycotoxins which infects lupins and causes lupinosis disease in livestock. Within the pathway, phomYc catalyzes the desaturation of the Ile moiety into 2,3-dehydroisoleucine (dIle). The pathway starts with the processing of the precursor phomA by several endopeptidases including kexin proteases as well as the cluster-specific S41 family peptidase phomP1 and the oligopeptidase phomG to produce 10 identical copies of the hexapeptide Tyr-Val-Ile-Pro-Ile-Asp. After being excised from the precursor peptide, the core peptides are cyclized and modified post-translationally by enzymes encoded within the gene cluster. The timing and order of proteolysis of the phomA precursor and PTMs are still unknown. Two tyrosinase-like enzymes, phomQ1 and phomQ2, catalyze the chlorination and hydroxylation of Tyr, respectively. PhomYb, is proposed to be involved in the construction of the macrocyclic structure. The other 4 ustYa family proteins may be involved in PTMs that generate the unique structure of phomopsin A. PhomYa is required for the hydroxylation of C-beta of Tyr. PhomYc, phomYd, and phomYe are responsible for the biosynthesis of 2,3-dehydroisoleucine (dIle), 2,3-dehydroaspartic acid (dAsp), and 3,4-dehydroproline (dPro), respectively. While dIle formation by phomYc is indispensable for the installation of dAsp by phomYd, the order of the other PTMs have not been elucidated yet. Most of the biosynthetic enzymes likely have broad substrate specificity, and thus, there might be a metabolic grid from a precursor to phomopsin A. The enzyme(s) responsible for the biosynthesis of 3,4-dehydrovaline (dVal) have also not been identified yet. Finally, phomM acts as an S-adenosylmethionine-dependent alpha-N-methyltransferase that catalyzes two successive N-methylation reactions, converting N-desmethyl-phomopsin A to phomopsin A and phomopsin A further to an N,N-dimethylated congener called phomopsin E. The protein is UstYa family oxidase phomYc of Diaporthe leptostromiformis (Lupinosis disease fungus).